The sequence spans 62 residues: Sperm protamine P1 (62 aa).

The interval 1-46 (MARCRRHSRSRSRSRNQCQRRRRRHYNRRRTYRRSRRHSRRRRVRR) is disordered.

It belongs to the protamine P1 family. In terms of tissue distribution, testis.

It is found in the nucleus. Its subcellular location is the chromosome. In terms of biological role, protamines substitute for histones in the chromatin of sperm during the haploid phase of spermatogenesis. They compact sperm DNA into a highly condensed, stable and inactive complex. The chain is Sperm protamine P1 (PRM1) from Planigale gilesi (Flat-skulled marsupial mouse).